A 191-amino-acid polypeptide reads, in one-letter code: A-type ATP synthase subunit E (191 aa).

The protein belongs to the V-ATPase E subunit family. As to quaternary structure, has multiple subunits with at least A(3), B(3), C, D, E, F, H, I and proteolipid K(x).

Its subcellular location is the cell membrane. In terms of biological role, component of the A-type ATP synthase that produces ATP from ADP in the presence of a proton gradient across the membrane. The sequence is that of A-type ATP synthase subunit E from Methanoregula boonei (strain DSM 21154 / JCM 14090 / 6A8).